The following is a 506-amino-acid chain: Probable cytochrome P450 519E1 (506 aa).

Residues 1–21 (MGIGLIILYLLIGLLAYDFTK) traverse the membrane as a helical segment. Cysteine 453 lines the heme pocket.

The protein belongs to the cytochrome P450 family. It depends on heme as a cofactor.

The protein resides in the membrane. In Dictyostelium discoideum (Social amoeba), this protein is Probable cytochrome P450 519E1 (cyp519E1).